Consider the following 241-residue polypeptide: Ribonuclease PH (241 aa).

Residues Arg89 and 127 to 129 contribute to the phosphate site; that span reads GTR.

Belongs to the RNase PH family. As to quaternary structure, homohexameric ring arranged as a trimer of dimers.

It catalyses the reaction tRNA(n+1) + phosphate = tRNA(n) + a ribonucleoside 5'-diphosphate. In terms of biological role, phosphorolytic 3'-5' exoribonuclease that plays an important role in tRNA 3'-end maturation. Removes nucleotide residues following the 3'-CCA terminus of tRNAs; can also add nucleotides to the ends of RNA molecules by using nucleoside diphosphates as substrates, but this may not be physiologically important. Probably plays a role in initiation of 16S rRNA degradation (leading to ribosome degradation) during starvation. This Xanthomonas euvesicatoria pv. vesicatoria (strain 85-10) (Xanthomonas campestris pv. vesicatoria) protein is Ribonuclease PH.